A 359-amino-acid chain; its full sequence is Aminomethyltransferase (359 aa).

Belongs to the GcvT family. The glycine cleavage system is composed of four proteins: P, T, L and H.

It carries out the reaction N(6)-[(R)-S(8)-aminomethyldihydrolipoyl]-L-lysyl-[protein] + (6S)-5,6,7,8-tetrahydrofolate = N(6)-[(R)-dihydrolipoyl]-L-lysyl-[protein] + (6R)-5,10-methylene-5,6,7,8-tetrahydrofolate + NH4(+). Functionally, the glycine cleavage system catalyzes the degradation of glycine. This Synechococcus sp. (strain RCC307) protein is Aminomethyltransferase.